Consider the following 325-residue polypeptide: Ribosomal RNA small subunit methyltransferase H (325 aa).

S-adenosyl-L-methionine is bound by residues 42-44 (GGH), D62, F86, D105, and Q112.

Belongs to the methyltransferase superfamily. RsmH family.

The protein localises to the cytoplasm. The enzyme catalyses cytidine(1402) in 16S rRNA + S-adenosyl-L-methionine = N(4)-methylcytidine(1402) in 16S rRNA + S-adenosyl-L-homocysteine + H(+). Specifically methylates the N4 position of cytidine in position 1402 (C1402) of 16S rRNA. The polypeptide is Ribosomal RNA small subunit methyltransferase H (Cupriavidus metallidurans (strain ATCC 43123 / DSM 2839 / NBRC 102507 / CH34) (Ralstonia metallidurans)).